Here is a 334-residue protein sequence, read N- to C-terminus: N-acetyl-gamma-glutamyl-phosphate reductase (334 aa).

The active site involves cysteine 154.

This sequence belongs to the NAGSA dehydrogenase family. Type 1 subfamily.

The protein localises to the cytoplasm. The enzyme catalyses N-acetyl-L-glutamate 5-semialdehyde + phosphate + NADP(+) = N-acetyl-L-glutamyl 5-phosphate + NADPH + H(+). Its pathway is amino-acid biosynthesis; L-arginine biosynthesis; N(2)-acetyl-L-ornithine from L-glutamate: step 3/4. Functionally, catalyzes the NADPH-dependent reduction of N-acetyl-5-glutamyl phosphate to yield N-acetyl-L-glutamate 5-semialdehyde. The polypeptide is N-acetyl-gamma-glutamyl-phosphate reductase (Yersinia pestis).